The primary structure comprises 499 residues: Glycerol kinase 2 (499 aa).

Position 13 (Thr-13) interacts with ADP. Residues Thr-13, Thr-14, and Ser-15 each contribute to the ATP site. Thr-13 contacts sn-glycerol 3-phosphate. Arg-17 is an ADP binding site. Sn-glycerol 3-phosphate-binding residues include Arg-83, Glu-84, Tyr-134, and Asp-241. Arg-83, Glu-84, Tyr-134, Asp-241, and Gln-242 together coordinate glycerol. Residues Thr-263 and Gly-306 each contribute to the ADP site. Thr-263, Gly-306, Gln-310, and Gly-407 together coordinate ATP. Gly-407 contacts ADP.

The protein belongs to the FGGY kinase family.

It catalyses the reaction glycerol + ATP = sn-glycerol 3-phosphate + ADP + H(+). Its pathway is polyol metabolism; glycerol degradation via glycerol kinase pathway; sn-glycerol 3-phosphate from glycerol: step 1/1. Its function is as follows. Key enzyme in the regulation of glycerol uptake and metabolism. Catalyzes the phosphorylation of glycerol to yield sn-glycerol 3-phosphate. The protein is Glycerol kinase 2 of Saccharolobus solfataricus (strain ATCC 35092 / DSM 1617 / JCM 11322 / P2) (Sulfolobus solfataricus).